A 550-amino-acid chain; its full sequence is Methionine--tRNA ligase (550 aa).

The 'HIGH' region motif lies at 13–23; it reads PYANGEIHLGH. 4 residues coordinate Zn(2+): C144, C147, C157, and C160. The short motif at 329-333 is the 'KMSKS' region element; it reads KMSKS. K332 lines the ATP pocket.

The protein belongs to the class-I aminoacyl-tRNA synthetase family. MetG type 1 subfamily. Monomer. Requires Zn(2+) as cofactor.

The protein localises to the cytoplasm. The catalysed reaction is tRNA(Met) + L-methionine + ATP = L-methionyl-tRNA(Met) + AMP + diphosphate. Functionally, is required not only for elongation of protein synthesis but also for the initiation of all mRNA translation through initiator tRNA(fMet) aminoacylation. The protein is Methionine--tRNA ligase of Ruthia magnifica subsp. Calyptogena magnifica.